A 274-amino-acid polypeptide reads, in one-letter code: Acyl-[acyl-carrier-protein]--UDP-N-acetylglucosamine O-acyltransferase (274 aa).

Belongs to the transferase hexapeptide repeat family. LpxA subfamily. In terms of assembly, homotrimer.

Its subcellular location is the cytoplasm. It catalyses the reaction a (3R)-hydroxyacyl-[ACP] + UDP-N-acetyl-alpha-D-glucosamine = a UDP-3-O-[(3R)-3-hydroxyacyl]-N-acetyl-alpha-D-glucosamine + holo-[ACP]. Its pathway is glycolipid biosynthesis; lipid IV(A) biosynthesis; lipid IV(A) from (3R)-3-hydroxytetradecanoyl-[acyl-carrier-protein] and UDP-N-acetyl-alpha-D-glucosamine: step 1/6. In terms of biological role, involved in the biosynthesis of lipid A, a phosphorylated glycolipid that anchors the lipopolysaccharide to the outer membrane of the cell. This chain is Acyl-[acyl-carrier-protein]--UDP-N-acetylglucosamine O-acyltransferase, found in Bartonella quintana (strain Toulouse) (Rochalimaea quintana).